A 473-amino-acid polypeptide reads, in one-letter code: FAD-dependent oxidoreductase dpasF (473 aa).

The signal sequence occupies residues 1–21 (MNRLLASALLVGSAVVAPVSA). Asn-26, Asn-54, Asn-92, Asn-133, Asn-185, Asn-276, and Asn-401 each carry an N-linked (GlcNAc...) asparagine glycan.

The protein belongs to the beta-cyclopiazonate dehydrogenase family. It depends on FAD as a cofactor.

Its pathway is secondary metabolite biosynthesis; terpenoid biosynthesis. FAD-dependent oxidoreductase; part of the gene cluster that mediates the biosynthesis of the diterpenoid pyrones subglutinols A and B. The first step of the pathway is the synthesis of the alpha-pyrone moiety by the polyketide synthase dpasA via condensation of one acetyl-CoA starter unit with 3 malonyl-CoA units and 2 methylations. The alpha-pyrone is then combined with geranylgeranyl pyrophosphate (GGPP) formed by the GGPP synthase dpasD through the action of the prenyltransferase dpasC to yield a linear alpha-pyrone diterpenoid. Subsequent steps in the diterpenoid pyrone biosynthetic pathway involve the decalin core formation, which is initiated by the epoxidation of the C10-C11 olefin by the FAD-dependent oxidoreductase dpasE, and is followed by a cyclization cascade catalyzed by the terpene cyclase dpasB. The FAD-linked oxidoreductase dpasF is then involved in tetrahydrofuran (THF) ring formation at the C5 unit to complete the formation of subglutinols A and B. DpasF possesses also an additional catalytic ability of multi-step oxidations to generate a new DDP analog with an enone system at the C5 named FDDP A. The protein is FAD-dependent oxidoreductase dpasF of Apiospora sacchari (Arthrinium sacchari).